The sequence spans 256 residues: Nuclear shuttle protein (256 aa).

A disordered region spans residues 18–50 (VSRNQSSKRGTFVRRTDGKRRKGPSSKAHDEPK). The short motif at 21–42 (NQSSKRGTFVRRTDGKRRKGPS) is the Bipartite nuclear localization signal element. The short motif at 81–96 (VLGKIEPNRSRSYIKL) is the Nuclear localization signal element. The interval 150 to 187 (EIFGARIHSHGNLAITPGLKDRYYVLHVLKRVLSVEKD) is interaction with Arabidopsis thaliana NSI protein.

The protein belongs to the begomovirus nuclear shuttle protein family. As to quaternary structure, binds to single-stranded and double-stranded viral DNA. Interacts with the host nuclear shuttle interacting (NSI) protein. This interaction may allow NSP to recruit NSI monomers to the viral genome and thus regulate nuclear export of viral genome by NSP.

The protein resides in the host nucleus. It is found in the host cytoplasm. Its subcellular location is the host cell membrane. In terms of biological role, binds to the genomic viral ssDNA, shuttles it into and out of the cell nucleus. Begomoviruses use 2 proteins to transport their DNA from cell to cell. The nuclear shuttle protein (NSP) shuttles it between nucleus and cytoplasm and the movement protein (MP) probably transports the DNA-NSP complex to the cell periphery and facilitates movement across the cell wall. The chain is Nuclear shuttle protein from Brassica oleracea (Wild cabbage).